The primary structure comprises 431 residues: Enolase (431 aa).

Residues Leu27–Glu47 are disordered. (2R)-2-phosphoglycerate is bound at residue Gln163. The active-site Proton donor is the Glu205. Mg(2+) is bound by residues Asp242, Glu285, and Asp312. (2R)-2-phosphoglycerate contacts are provided by Lys337, Arg366, Ser367, and Lys388. Lys337 (proton acceptor) is an active-site residue.

The protein belongs to the enolase family. The cofactor is Mg(2+).

It is found in the cytoplasm. The protein resides in the secreted. It localises to the cell surface. The enzyme catalyses (2R)-2-phosphoglycerate = phosphoenolpyruvate + H2O. The protein operates within carbohydrate degradation; glycolysis; pyruvate from D-glyceraldehyde 3-phosphate: step 4/5. Its function is as follows. Catalyzes the reversible conversion of 2-phosphoglycerate (2-PG) into phosphoenolpyruvate (PEP). It is essential for the degradation of carbohydrates via glycolysis. In Oleidesulfovibrio alaskensis (strain ATCC BAA-1058 / DSM 17464 / G20) (Desulfovibrio alaskensis), this protein is Enolase.